The following is a 243-amino-acid chain: Carboxy-S-adenosyl-L-methionine synthase (243 aa).

S-adenosyl-L-methionine-binding positions include Tyr35, 68–70 (GCS), 92–93 (DN), and Arg199.

This sequence belongs to the class I-like SAM-binding methyltransferase superfamily. Cx-SAM synthase family. Homodimer.

It carries out the reaction prephenate + S-adenosyl-L-methionine = carboxy-S-adenosyl-L-methionine + 3-phenylpyruvate + H2O. Catalyzes the conversion of S-adenosyl-L-methionine (SAM) to carboxy-S-adenosyl-L-methionine (Cx-SAM). This Helicobacter pylori (strain J99 / ATCC 700824) (Campylobacter pylori J99) protein is Carboxy-S-adenosyl-L-methionine synthase.